Here is a 467-residue protein sequence, read N- to C-terminus: Envelope glycoprotein M (467 aa).

Residues 1-32 (MGRRAPRGSPEAAPGADVAPGARAAWWVWCVQ) are Intravirion-facing. Residues 33–53 (VATFIVSAICVVGLLVLASVF) form a helical membrane-spanning segment. Residues 54-90 (RDRFPCLYAPATSYAKANATVEVRGGVAVPLRLDTQS) lie on the Virion surface side of the membrane. Residues 91 to 111 (LLATYAITSTLLLAAAVYAAV) traverse the membrane as a helical segment. Residues 112 to 137 (GAVTSRYERALDAARRLAAARMAMPH) lie on the Intravirion side of the membrane. Residues 138–158 (ATLIAGNVCAWLLQITVLLLA) form a helical membrane-spanning segment. The Virion surface segment spans residues 159-163 (HRISQ). The chain crosses the membrane as a helical span at residues 164–184 (LAHLIYVLHFACLVYLAAHFC). Over 185 to 220 (TRGVLSGTYLRQVHGLIDPAPTHHRIVGPVRAVMTN) the chain is Intravirion. Residues 221–241 (ALLLGTLLCTAAAAVSLNTIA) form a helical membrane-spanning segment. At 242–250 (ALNFNFSAP) the chain is on the virion surface side. The chain crosses the membrane as a helical span at residues 251–271 (SMLICLTTLFALLVVSLLLVV). Residues 272-280 (EGVLCHYVR) are Intravirion-facing. A helical membrane pass occupies residues 281–301 (VLVGPHLGAIAATGIVGLACE). The Virion surface portion of the chain corresponds to 302-318 (HYHTGGYYVVEQQWPGA). Residues 319–339 (QTGVRVALALVAAFALAMAVL) traverse the membrane as a helical segment. At 340–467 (RCTRAYLYHR…EPVYSTVRRW (128 aa)) the chain is on the intravirion side. Residues 371–381 (RRVRSSMRGSR) show a composition bias toward basic residues. 2 disordered regions span residues 371–395 (RRVR…AETP) and 432–459 (VQRP…AGEP).

Belongs to the herpesviridae glycoprotein M family. As to quaternary structure, interacts (via N-terminus) with gN (via N-terminus). The gM-gN heterodimer forms the gCII complex.

The protein resides in the virion membrane. It localises to the host Golgi apparatus. The protein localises to the host trans-Golgi network. It is found in the host endosome membrane. Its subcellular location is the host nucleus inner membrane. Functionally, envelope glycoprotein important for virion assembly and egress. Plays a role in the correct incorporation of gH-gL into virion membrane. Directs the glycoprotein N (gN) to the host trans-Golgi network. The polypeptide is Envelope glycoprotein M (Human herpesvirus 2 (strain HG52) (HHV-2)).